A 259-amino-acid polypeptide reads, in one-letter code: Thiazole synthase (259 aa).

K100 functions as the Schiff-base intermediate with DXP in the catalytic mechanism. 1-deoxy-D-xylulose 5-phosphate is bound by residues G161, 187-188 (AG), and 209-210 (NT).

The protein belongs to the ThiG family. In terms of assembly, homotetramer. Forms heterodimers with either ThiH or ThiS.

The protein resides in the cytoplasm. It carries out the reaction [ThiS sulfur-carrier protein]-C-terminal-Gly-aminoethanethioate + 2-iminoacetate + 1-deoxy-D-xylulose 5-phosphate = [ThiS sulfur-carrier protein]-C-terminal Gly-Gly + 2-[(2R,5Z)-2-carboxy-4-methylthiazol-5(2H)-ylidene]ethyl phosphate + 2 H2O + H(+). It functions in the pathway cofactor biosynthesis; thiamine diphosphate biosynthesis. Catalyzes the rearrangement of 1-deoxy-D-xylulose 5-phosphate (DXP) to produce the thiazole phosphate moiety of thiamine. Sulfur is provided by the thiocarboxylate moiety of the carrier protein ThiS. In vitro, sulfur can be provided by H(2)S. The sequence is that of Thiazole synthase from Halalkalibacterium halodurans (strain ATCC BAA-125 / DSM 18197 / FERM 7344 / JCM 9153 / C-125) (Bacillus halodurans).